A 4699-amino-acid polypeptide reads, in one-letter code: PKS-NRPS hybrid synthetase cheA (4699 aa).

The segment covering 1 to 21 (MSDNDDEWNGFSDDNGEDDGP) has biased composition (acidic residues). Disordered regions lie at residues 1 to 38 (MSDNDDEWNGFSDDNGEDDGPPEPGRPSQIDGQPWDVP) and 136 to 165 (DGWRFHSHPDPQHSVHNHGPSLHPSAHTQH). Over residues 136 to 148 (DGWRFHSHPDPQH) the composition is skewed to basic and acidic residues. Residues 172–520 (SLDTIAELSN…VQQNVEEMAK (349 aa)) are N-terminal acylcarrier protein transacylase domain (SAT). Residues 625–836 (PLPSVEDNVA…AGAPGARVTR (212 aa)) form a disordered region. Over residues 674–688 (TQGSQGSQGRRTPGS) the composition is skewed to low complexity. Residues 724-737 (PKRRGRPPGSKNKK) are compositionally biased toward basic residues. A Ketosynthase family 3 (KS3) domain is found at 737–1138 (KKDQAPAPAE…GANAHAILEA (402 aa)). Low complexity predominate over residues 764–777 (ASAPRRGLRAAPAA). Positions 802–816 (ATASTPRAQSDQGTG) are enriched in polar residues. Catalysis depends on for beta-ketoacyl synthase activity residues C873, H1012, and H1058. Residues 1250–1573 (VFTGQGAQWP…VGTLLRQRDA (324 aa)) form a malonyl-CoA:ACP transacylase (MAT) domain region. The interval 1644 to 1777 (NELLGTRIMD…ANLIISLGEP (134 aa)) is N-terminal hotdog fold. Residues 1644-1947 (NELLGTRIMD…TKPLVPPTPS (304 aa)) enclose the PKS/mFAS DH domain. The interval 1645 to 1941 (ELLGTRIMDN…QLQGLHTKPL (297 aa)) is dehydratase (DH) domain. H1676 functions as the Proton acceptor; for dehydratase activity in the catalytic mechanism. The tract at residues 1794 to 1947 (MLDVPAERFY…TKPLVPPTPS (154 aa)) is C-terminal hotdog fold. D1854 functions as the Proton donor; for dehydratase activity in the catalytic mechanism. The segment at 2050 to 2241 (LNRFYIEALG…RNTGFSGADE (192 aa)) is methyltransferase (MT) domain. Residues 2794–2967 (TYWLVGLTGG…PAAAVNIGAV (174 aa)) form a ketoreductase (KR) domain region. A Carrier 1 domain is found at 3076-3153 (DASEILEDAY…ALFELVKERA (78 aa)). An O-(pantetheine 4'-phosphoryl)serine modification is found at S3113. The interval 3164 to 3265 (EQPDQVKSPR…PVASSPDAGL (102 aa)) is disordered. 2 stretches are compositionally biased toward polar residues: residues 3200 to 3209 (SLDQGSSWDS) and 3218 to 3233 (GHDSTILSSTAPSSPI). The condensation (C) domain stretch occupies residues 3268 to 3696 (SVPLSFSQAR…PISRISKPPL (429 aa)). An adenylation (A) domain region spans residues 3730 to 4113 (IQAHPDKLAL…GGLILEGRID (384 aa)). The Carrier 2 domain maps to 4236-4316 (EGLPAMQHLI…TMAALVASGS (81 aa)). The thiolation and peptide carrier (T) domain stretch occupies residues 4241-4313 (MQHLIKQLWE…TLETMAALVA (73 aa)). O-(pantetheine 4'-phosphoryl)serine is present on S4276. Residues 4367 to 4598 (LTGSTGFLGR…ISVHTVAAAI (232 aa)) are reductase (R) domain.

In the C-terminal section; belongs to the NRP synthetase family.

It participates in secondary metabolite biosynthesis. Functionally, PKS-NRPS hybrid synthetase; part of the gene cluster that mediates the biosynthesis of chaetoglobosin A which has a unique inhibitory activity against actin polymerization in mammalian cells. Chaetoglobosin A and its intermediates are involved in the morphological differentiation of C.globosum. The first step of the pathway is the synthesis of prochaetoglobosin I via condensation of one acetyl-CoA, 8 malonyl-CoA, and a L-tryptophan molecule by the PKS-NRPS hybrid synthetase cheA, followed by reduction of backbone double bond to install desired geometry by the enoyl reductase cheB. Further multiple oxidation steps performed by the cytochrome P450 monooxygenases cheE and cheG, as well as by the FAD-linked oxidoreductase cheF, lead to the formation of chaetoglobosin A. Depending on the order of action of these reductases, distinct intermediates can be identified. Within the pathway, the cytochrome P450 monooxygenase cheE catalyzes a stereospecific epoxidation on prochaetoglobosin I, cytoglobosin D, and chaetoglobosin J intermediates. The FAD-linked oxidoreductase cheF performs dehydrogenation of the C-20 hydroxyl groups in the 20-dihyrochaetoglobosin A and cytoglobosin D intermediates. Finally, the cytochrome P450 monooxygenase cheG can catalyze the stereospecific dihydroxylation of prochaetoglobosin I and prochaetoglobosin IV at C-19 and C-20, respectively. The Diels-Alderase cheD may play a role in the post-PKS-NRPS biosynthetic steps catalyzing Diels-Alder cyclization. The chain is PKS-NRPS hybrid synthetase cheA from Chaetomium globosum (strain ATCC 6205 / CBS 148.51 / DSM 1962 / NBRC 6347 / NRRL 1970) (Soil fungus).